Consider the following 44-residue polypeptide: Mu-conotoxin-like Cal 12.1.1e (44 aa).

4 disulfide bridges follow: C3-C16, C11-C28, C18-C33, and C27-C38. W17 bears the 6'-bromotryptophan mark. 4-hydroxyproline is present on P23. W36 and W37 each carry 6'-bromotryptophan. The residue at position 39 (P39) is a 4-hydroxyproline. The residue at position 43 (W43) is a 6'-bromotryptophan.

As to expression, expressed by the venom duct.

The protein localises to the secreted. In terms of biological role, mu-conotoxins block voltage-gated sodium channels. This toxin reversibly blocks voltage-gated sodium channel in cephalopods, with no alteration in the voltage dependence of sodium conductance or on the kinetics of inactivation. This is Mu-conotoxin-like Cal 12.1.1e from Californiconus californicus (California cone).